Here is a 239-residue protein sequence, read N- to C-terminus: tRNA (guanine-N(7)-)-methyltransferase (239 aa).

S-adenosyl-L-methionine is bound by residues glutamate 69, glutamate 94, aspartate 121, and aspartate 144. Residue aspartate 144 is part of the active site. Residues lysine 148, aspartate 180, and 217 to 220 (TKFE) each bind substrate.

It belongs to the class I-like SAM-binding methyltransferase superfamily. TrmB family. In terms of assembly, monomer.

It catalyses the reaction guanosine(46) in tRNA + S-adenosyl-L-methionine = N(7)-methylguanosine(46) in tRNA + S-adenosyl-L-homocysteine. The protein operates within tRNA modification; N(7)-methylguanine-tRNA biosynthesis. Functionally, catalyzes the formation of N(7)-methylguanine at position 46 (m7G46) in tRNA. This chain is tRNA (guanine-N(7)-)-methyltransferase, found in Buchnera aphidicola subsp. Acyrthosiphon pisum (strain 5A).